A 291-amino-acid polypeptide reads, in one-letter code: MPGPMNKRDLEPGIITDLAGRTTYGDYLQLDRLLSAQVTRSQPPHHDELLFIIQHQTSELWMKLLIHELGACIRYVQADRLEPSFKIFARVAHIQRMLFEQWSVLETLTPNEYLEFRDTLGSSSGFQSFQYRAVEFLLGNKDAQALMPFRHVPAIHGELERLFESPSLYDEFLRHLSRMGHPVPQSHVQRDWRKPYEKSPEVVEVFRRIYQDAEAHWDAYEMCEKLVDTEERFQLWRYRHMMTVMRIIGFKQGTGGSSGVGFLRKALDLRFFPELWDVRTELTPPPPRHRP.

Residues 51–55, Tyr113, and Arg117 each bind substrate; that span reads FIIQH. Residue His240 participates in heme binding. Thr254 is a binding site for substrate.

It belongs to the tryptophan 2,3-dioxygenase family. Homotetramer. Heme serves as cofactor.

It catalyses the reaction L-tryptophan + O2 = N-formyl-L-kynurenine. Its pathway is amino-acid degradation; L-tryptophan degradation via kynurenine pathway; L-kynurenine from L-tryptophan: step 1/2. In terms of biological role, heme-dependent dioxygenase that catalyzes the oxidative cleavage of the L-tryptophan (L-Trp) pyrrole ring and converts L-tryptophan to N-formyl-L-kynurenine. Catalyzes the oxidative cleavage of the indole moiety. This chain is Tryptophan 2,3-dioxygenase, found in Myxococcus xanthus (strain DK1622).